The sequence spans 227 residues: Large ribosomal subunit protein uL10c (227 aa).

Residues 1 to 47 constitute a chloroplast transit peptide; that stretch reads MEATFFTLPSSTSHSYPFSLKSHFNNSLTLPTHPHFKPKSKNLTIRS.

Belongs to the universal ribosomal protein uL10 family. Part of the 50S ribosomal subunit.

Its subcellular location is the plastid. The protein resides in the chloroplast. In terms of biological role, this protein binds directly to 23S ribosomal RNA. This Nicotiana tabacum (Common tobacco) protein is Large ribosomal subunit protein uL10c (RPL10).